The chain runs to 120 residues: NAD(P)H-quinone oxidoreductase subunit 3, chloroplastic (120 aa).

3 consecutive transmembrane segments (helical) span residues 9–29 (IFWA…LISG), 64–84 (MFAL…PWAM), and 88–108 (VLGV…IVGS).

It belongs to the complex I subunit 3 family. As to quaternary structure, NDH is composed of at least 16 different subunits, 5 of which are encoded in the nucleus.

The protein localises to the plastid. It is found in the chloroplast thylakoid membrane. The catalysed reaction is a plastoquinone + NADH + (n+1) H(+)(in) = a plastoquinol + NAD(+) + n H(+)(out). It carries out the reaction a plastoquinone + NADPH + (n+1) H(+)(in) = a plastoquinol + NADP(+) + n H(+)(out). Its function is as follows. NDH shuttles electrons from NAD(P)H:plastoquinone, via FMN and iron-sulfur (Fe-S) centers, to quinones in the photosynthetic chain and possibly in a chloroplast respiratory chain. The immediate electron acceptor for the enzyme in this species is believed to be plastoquinone. Couples the redox reaction to proton translocation, and thus conserves the redox energy in a proton gradient. The chain is NAD(P)H-quinone oxidoreductase subunit 3, chloroplastic from Liriodendron tulipifera (Tuliptree).